The sequence spans 228 residues: Ribonuclease 3 (228 aa).

In terms of domain architecture, RNase III spans 2-130; that stretch reads LTYLEQKINY…LLAAVYLDGG (129 aa). E43 provides a ligand contact to Mg(2+). The active site involves D47. Residues D116 and E119 each contribute to the Mg(2+) site. The active site involves E119. Residues 157–226 enclose the DRBM domain; the sequence is DYKTRLQEVV…AMEALSKLGI (70 aa).

It belongs to the ribonuclease III family. In terms of assembly, homodimer. Requires Mg(2+) as cofactor.

The protein localises to the cytoplasm. It catalyses the reaction Endonucleolytic cleavage to 5'-phosphomonoester.. In terms of biological role, digests double-stranded RNA. Involved in the processing of primary rRNA transcript to yield the immediate precursors to the large and small rRNAs (23S and 16S). Processes some mRNAs, and tRNAs when they are encoded in the rRNA operon. Processes pre-crRNA and tracrRNA of type II CRISPR loci if present in the organism. This chain is Ribonuclease 3, found in Caldanaerobacter subterraneus subsp. tengcongensis (strain DSM 15242 / JCM 11007 / NBRC 100824 / MB4) (Thermoanaerobacter tengcongensis).